A 964-amino-acid polypeptide reads, in one-letter code: Glycine dehydrogenase (decarboxylating) (964 aa).

Positions 1–10 (MNSTLQNRNR) are enriched in polar residues. Positions 1–25 (MNSTLQNRNRTNLERVSTDPLDTFP) are disordered. Position 713 is an N6-(pyridoxal phosphate)lysine (K713).

The protein belongs to the GcvP family. The glycine cleavage system is composed of four proteins: P, T, L and H. Pyridoxal 5'-phosphate is required as a cofactor.

It carries out the reaction N(6)-[(R)-lipoyl]-L-lysyl-[glycine-cleavage complex H protein] + glycine + H(+) = N(6)-[(R)-S(8)-aminomethyldihydrolipoyl]-L-lysyl-[glycine-cleavage complex H protein] + CO2. Its function is as follows. The glycine cleavage system catalyzes the degradation of glycine. The P protein binds the alpha-amino group of glycine through its pyridoxal phosphate cofactor; CO(2) is released and the remaining methylamine moiety is then transferred to the lipoamide cofactor of the H protein. The chain is Glycine dehydrogenase (decarboxylating) from Leptospira borgpetersenii serovar Hardjo-bovis (strain JB197).